An 825-amino-acid chain; its full sequence is NT-3 growth factor receptor (825 aa).

Residues 1-31 form the signal peptide; that stretch reads MDVSLCPAKCSFWRIFLLGSVWLDYVGSVLA. 2 disulfide bridges follow: cysteine 32–cysteine 38 and cysteine 36–cysteine 45. Topologically, residues 32 to 429 are extracellular; sequence CPANCVCSKT…TVTHKPEEDT (398 aa). N-linked (GlcNAc...) asparagine glycosylation is found at asparagine 68, asparagine 72, and asparagine 79. 2 LRR repeats span residues 104–125 and 128–149; these read GLQK…AFAK and HLRY…LFQT. Residues asparagine 133 and asparagine 163 are each glycosylated (N-linked (GlcNAc...) asparagine). The LRRCT domain occupies 160 to 209; that stretch reads NFFNCSCDIRWMQLWQEQGEARLDSQSLYCISADGSQLPLFRMNISQCDL. 2 disulfides stabilise this stretch: cysteine 164–cysteine 189 and cysteine 166–cysteine 207. Asparagine 203, asparagine 218, asparagine 232, asparagine 259, asparagine 267, asparagine 272, and asparagine 294 each carry an N-linked (GlcNAc...) asparagine glycan. Ig-like C2-type domains are found at residues 210-300 and 309-382; these read PEIS…VALT and SLVE…IAKN. Cysteine 231 and cysteine 284 form a disulfide bridge. A disulfide bond links cysteine 320 and cysteine 362. 2 N-linked (GlcNAc...) asparagine glycosylation sites follow: asparagine 375 and asparagine 388. A helical membrane pass occupies residues 430 to 453; the sequence is FGVSIAVGLAAFACVLLVVLFIMI. Residues 454–825 are Cytoplasmic-facing; sequence NKYGRRSKFG…ATPIYLDILG (372 aa). At serine 493 the chain carries Phosphoserine. Phosphotyrosine is present on tyrosine 516. Residues 538-825 enclose the Protein kinase domain; sequence IVLKRELGEG…ATPIYLDILG (288 aa). Residues 544-552 and lysine 572 contribute to the ATP site; that span reads LGEGAFGKV. Aspartate 679 serves as the catalytic Proton acceptor. Tyrosine 705, tyrosine 709, and tyrosine 710 each carry phosphotyrosine; by autocatalysis.

This sequence belongs to the protein kinase superfamily. Tyr protein kinase family. Insulin receptor subfamily. Exists in a dynamic equilibrium between monomeric (low affinity) and dimeric (high affinity) structures. Binds SH2B2. Interacts with SQSTM1 and KIDINS220. Interacts with PTPRS. Interacts with MAPK8IP3/JIP3. In terms of processing, ligand-mediated auto-phosphorylation. In terms of tissue distribution, isoform 2 expression is restricted to specific areas in adult brain. Isoform 3 transcripts are readily detected early during embryogenesis and are expressed predominantly in adult brain and gonads.

The protein resides in the membrane. It carries out the reaction L-tyrosyl-[protein] + ATP = O-phospho-L-tyrosyl-[protein] + ADP + H(+). Receptor tyrosine kinase involved in nervous system and probably heart development. Upon binding of its ligand NTF3/neurotrophin-3, NTRK3 autophosphorylates and activates different signaling pathways, including the phosphatidylinositol 3-kinase/AKT and the MAPK pathways, that control cell survival and differentiation. The chain is NT-3 growth factor receptor (Ntrk3) from Mus musculus (Mouse).